The sequence spans 431 residues: tRNA(Ile)-lysidine synthase (431 aa).

An ATP-binding site is contributed by 25–30 (SGGLDS).

This sequence belongs to the tRNA(Ile)-lysidine synthase family.

It localises to the cytoplasm. It carries out the reaction cytidine(34) in tRNA(Ile2) + L-lysine + ATP = lysidine(34) in tRNA(Ile2) + AMP + diphosphate + H(+). Ligates lysine onto the cytidine present at position 34 of the AUA codon-specific tRNA(Ile) that contains the anticodon CAU, in an ATP-dependent manner. Cytidine is converted to lysidine, thus changing the amino acid specificity of the tRNA from methionine to isoleucine. In Legionella pneumophila (strain Lens), this protein is tRNA(Ile)-lysidine synthase.